Here is a 481-residue protein sequence, read N- to C-terminus: Aspartyl/glutamyl-tRNA(Asn/Gln) amidotransferase subunit B (481 aa).

It belongs to the GatB/GatE family. GatB subfamily. As to quaternary structure, heterotrimer of A, B and C subunits.

The enzyme catalyses L-glutamyl-tRNA(Gln) + L-glutamine + ATP + H2O = L-glutaminyl-tRNA(Gln) + L-glutamate + ADP + phosphate + H(+). It carries out the reaction L-aspartyl-tRNA(Asn) + L-glutamine + ATP + H2O = L-asparaginyl-tRNA(Asn) + L-glutamate + ADP + phosphate + 2 H(+). Functionally, allows the formation of correctly charged Asn-tRNA(Asn) or Gln-tRNA(Gln) through the transamidation of misacylated Asp-tRNA(Asn) or Glu-tRNA(Gln) in organisms which lack either or both of asparaginyl-tRNA or glutaminyl-tRNA synthetases. The reaction takes place in the presence of glutamine and ATP through an activated phospho-Asp-tRNA(Asn) or phospho-Glu-tRNA(Gln). In Pseudomonas fluorescens (strain ATCC BAA-477 / NRRL B-23932 / Pf-5), this protein is Aspartyl/glutamyl-tRNA(Asn/Gln) amidotransferase subunit B.